Here is a 33-residue protein sequence, read N- to C-terminus: Photosystem II reaction center protein Psb30 (33 aa).

The helical transmembrane segment at 5-25 (IVFQLTSLVLILAAGPLVVVL) threads the bilayer.

It belongs to the Psb30/Ycf12 family. In terms of assembly, PSII is composed of 1 copy each of membrane proteins PsbA, PsbB, PsbC, PsbD, PsbE, PsbF, PsbH, PsbI, PsbJ, PsbK, PsbL, PsbM, PsbT, PsbX, PsbY, PsbZ, Psb30/Ycf12, peripheral proteins of the oxygen-evolving complex and a large number of cofactors. It forms dimeric complexes.

It localises to the plastid. The protein localises to the chloroplast thylakoid membrane. Functionally, a core subunit of photosystem II (PSII), probably helps stabilize the reaction center. The protein is Photosystem II reaction center protein Psb30 of Tetradesmus obliquus (Green alga).